The primary structure comprises 129 residues: Small ribosomal subunit protein uS11 (129 aa).

It belongs to the universal ribosomal protein uS11 family. In terms of assembly, part of the 30S ribosomal subunit. Interacts with proteins S7 and S18. Binds to IF-3.

Functionally, located on the platform of the 30S subunit, it bridges several disparate RNA helices of the 16S rRNA. Forms part of the Shine-Dalgarno cleft in the 70S ribosome. The protein is Small ribosomal subunit protein uS11 of Thermosipho melanesiensis (strain DSM 12029 / CIP 104789 / BI429).